Consider the following 227-residue polypeptide: Uracil-DNA glycosylase (227 aa).

Residue aspartate 68 is the Proton acceptor of the active site.

Belongs to the uracil-DNA glycosylase (UDG) superfamily. UNG family.

The protein localises to the cytoplasm. It catalyses the reaction Hydrolyzes single-stranded DNA or mismatched double-stranded DNA and polynucleotides, releasing free uracil.. In terms of biological role, excises uracil residues from the DNA which can arise as a result of misincorporation of dUMP residues by DNA polymerase or due to deamination of cytosine. The chain is Uracil-DNA glycosylase from Mycobacterium leprae (strain Br4923).